Here is an 80-residue protein sequence, read N- to C-terminus: Calmodulin (80 aa).

2 EF-hand domains span residues 12-47 (DSEE…LGEK) and 48-80 (LTDE…MTSK). Residues Asp25, Asp27, Asn29, Glu36, Asp61, Asp63, Asp65, Gln67, and Glu72 each contribute to the Ca(2+) site.

Belongs to the calmodulin family.

Its function is as follows. Calmodulin mediates the control of a large number of enzymes, ion channels and other proteins by Ca(2+). Among the enzymes to be stimulated by the calmodulin-Ca(2+) complex are a number of protein kinases and phosphatases. The sequence is that of Calmodulin from Strongylocentrotus purpuratus (Purple sea urchin).